Here is a 128-residue protein sequence, read N- to C-terminus: SH2 domain-containing protein 1A (128 aa).

In terms of domain architecture, SH2 spans V6–V102. Positions E67–Q92 are interaction with FYN SH3 domain. K89 bears the N6-acetyllysine mark. A disordered region spans residues K104–P128. A compositionally biased stretch (basic and acidic residues) spans G116 to P128.

Interacts with CD84, CD244, LY9, SLAMF1 and FYN. Interacts with NTRK1, NTRK2 and NTRK3.

It is found in the cytoplasm. In terms of biological role, cytoplasmic adapter regulating receptors of the signaling lymphocytic activation molecule (SLAM) family such as SLAMF1, CD244, LY9, CD84, SLAMF6 and SLAMF7. In SLAM signaling seems to cooperate with SH2D1B/EAT-2. Initially it has been proposed that association with SLAMF1 prevents SLAMF1 binding to inhibitory effectors including INPP5D/SHIP1 and PTPN11/SHP-2. However, by simultaneous interactions, recruits FYN which subsequently phosphorylates and activates SLAMF1. Positively regulates CD244/2B4- and CD84-mediated natural killer (NK) cell functions. Can also promote CD48-, SLAMF6 -, LY9-, and SLAMF7-mediated NK cell activation. In the context of NK cell-mediated cytotoxicity enhances conjugate formation with target cells. May also regulate the activity of the neurotrophin receptors NTRK1, NTRK2 and NTRK3. The protein is SH2 domain-containing protein 1A (SH2D1A) of Bos taurus (Bovine).